Reading from the N-terminus, the 681-residue chain is Methionine--tRNA ligase (681 aa).

The short motif at 15–25 is the 'HIGH' region element; that stretch reads PYANGPIHLGH. Zn(2+)-binding residues include cysteine 146, cysteine 149, cysteine 159, and cysteine 162. The 'KMSKS' region signature appears at 332–336; it reads KMSKS. Lysine 335 lines the ATP pocket. The tract at residues 547–569 is disordered; sequence DNMAQAPKDNGKAKKDKKEAKSE. Basic and acidic residues predominate over residues 555-569; the sequence is DNGKAKKDKKEAKSE. The region spanning 580–681 is the tRNA-binding domain; the sequence is DFAKIDLRIA…SGAQPGMQVK (102 aa).

The protein belongs to the class-I aminoacyl-tRNA synthetase family. MetG type 1 subfamily. As to quaternary structure, homodimer. It depends on Zn(2+) as a cofactor.

It is found in the cytoplasm. It catalyses the reaction tRNA(Met) + L-methionine + ATP = L-methionyl-tRNA(Met) + AMP + diphosphate. Is required not only for elongation of protein synthesis but also for the initiation of all mRNA translation through initiator tRNA(fMet) aminoacylation. This chain is Methionine--tRNA ligase, found in Hahella chejuensis (strain KCTC 2396).